We begin with the raw amino-acid sequence, 609 residues long: MCGIFGYLGNQDGVSIVLEGLAKLEYRGYDSAGLAAVVEQELFIRKTVGRVQELSNLFQEREIPTASVIGHTRWATHGVPTEINAHPHVDEGRSCAVVHNGIIENFKELRRELTAQGISFASDTDSEIIVQLFSLYYQESQDLVFSFCQTLAQLRGSVACALIHKDHPHTILCASQESPLILGLGKEETFIASDSRAFFKYTRHSQALASGEFAIVSQGKEPEVYNLELKKIHKDVRQITCSEDASDKSGYGYYMLKEIYDQPEVLEGLIQKHMDEEGHILSEFLSDVPIKSFKEITIVACGSSYHAGYLAKYIIESLVSIPVHIEVASEFRYRRPYIGKDTLGILISQSGETADTLAALKELRRRNIAYLLGICNVPESAIALGVDHCLFLEAGVEIGVATTKAFTSQLLLLVFLGLKLANVHGALTHAEQCSFGQGLQSLPDLCQKLLANESLHSWAQPYSYEDKFLFLGRRLMYPVVMEAALKLKEIAYIEANAYPGGEMKHGPIALISKGTPVIAFCGDDIVYEKMIGNMMEVKARHAHVIAIAPESREDIAAVSDQQIFVPDCHFLAAPVLYTIVGQVMAYAMALAKGMEIDCPRNLAKSVTVE.

The Nucleophile; for GATase activity role is filled by Cys2. The region spanning 2–219 (CGIFGYLGNQ…SGEFAIVSQG (218 aa)) is the Glutamine amidotransferase type-2 domain. 2 consecutive SIS domains span residues 285–426 (LSDV…VHGA) and 458–599 (WAQP…IDCP). The active-site For Fru-6P isomerization activity is Lys604.

Homodimer.

It localises to the cytoplasm. It carries out the reaction D-fructose 6-phosphate + L-glutamine = D-glucosamine 6-phosphate + L-glutamate. Functionally, catalyzes the first step in hexosamine metabolism, converting fructose-6P into glucosamine-6P using glutamine as a nitrogen source. This Chlamydia pneumoniae (Chlamydophila pneumoniae) protein is Glutamine--fructose-6-phosphate aminotransferase [isomerizing].